The primary structure comprises 514 residues: Lysine--tRNA ligase (514 aa).

The Mg(2+) site is built by Glu424 and Glu431.

The protein belongs to the class-II aminoacyl-tRNA synthetase family. In terms of assembly, homodimer. Requires Mg(2+) as cofactor.

It is found in the cytoplasm. The catalysed reaction is tRNA(Lys) + L-lysine + ATP = L-lysyl-tRNA(Lys) + AMP + diphosphate. The chain is Lysine--tRNA ligase from Cupriavidus necator (strain ATCC 17699 / DSM 428 / KCTC 22496 / NCIMB 10442 / H16 / Stanier 337) (Ralstonia eutropha).